A 298-amino-acid polypeptide reads, in one-letter code: UDP-N-acetylenolpyruvoylglucosamine reductase (298 aa).

Positions 26–191 constitute an FAD-binding PCMH-type domain; it reads KTGGEAEYLA…LSATFSLKPG (166 aa). Arg170 is a catalytic residue. Residue Ser220 is the Proton donor of the active site. The active site involves Glu290.

Belongs to the MurB family. FAD is required as a cofactor.

It localises to the cytoplasm. It carries out the reaction UDP-N-acetyl-alpha-D-muramate + NADP(+) = UDP-N-acetyl-3-O-(1-carboxyvinyl)-alpha-D-glucosamine + NADPH + H(+). It functions in the pathway cell wall biogenesis; peptidoglycan biosynthesis. In terms of biological role, cell wall formation. The polypeptide is UDP-N-acetylenolpyruvoylglucosamine reductase (Lactobacillus acidophilus (strain ATCC 700396 / NCK56 / N2 / NCFM)).